An 830-amino-acid chain; its full sequence is Periplasmic nitrate reductase (830 aa).

A signal peptide (tat-type signal) is located at residues 1–31 (MKLSRRDFMKANAAVAAAAAAGMTIPTVAKA). The 4Fe-4S Mo/W bis-MGD-type domain maps to 39–95 (IKWDKAPCRFCGTGCGVLVGTQNGRIVASQGDPDSPVNRGLNCIKGYFLPKIMYGKD). Residues Cys-46, Cys-49, Cys-53, and Cys-81 each coordinate [4Fe-4S] cluster. Residues Lys-83, Gln-150, Asn-175, Cys-179, 212 to 219 (WGSNMAEM), 243 to 247 (STYEH), 262 to 264 (QTD), Met-372, Gln-376, Asn-482, 508 to 509 (SD), Lys-531, Asp-558, and 718 to 727 (TGRVLEHWHT) contribute to the Mo-bis(molybdopterin guanine dinucleotide) site. Residue Phe-794 participates in substrate binding. 2 residues coordinate Mo-bis(molybdopterin guanine dinucleotide): Asn-802 and Lys-819.

It belongs to the prokaryotic molybdopterin-containing oxidoreductase family. NasA/NapA/NarB subfamily. Component of the periplasmic nitrate reductase NapAB complex composed of NapA and NapB. The cofactor is [4Fe-4S] cluster. Mo-bis(molybdopterin guanine dinucleotide) serves as cofactor. Predicted to be exported by the Tat system. The position of the signal peptide cleavage has not been experimentally proven.

Its subcellular location is the periplasm. It carries out the reaction 2 Fe(II)-[cytochrome] + nitrate + 2 H(+) = 2 Fe(III)-[cytochrome] + nitrite + H2O. In terms of biological role, catalytic subunit of the periplasmic nitrate reductase complex NapAB. Receives electrons from NapB and catalyzes the reduction of nitrate to nitrite. This chain is Periplasmic nitrate reductase, found in Yersinia pestis bv. Antiqua (strain Antiqua).